The primary structure comprises 330 residues: Probable WRKY transcription factor 39 (330 aa).

Residues 256 to 322 constitute a DNA-binding region (WRKY); sequence KIADIPPDEY…YEGEHNHSRI (67 aa).

The protein resides in the nucleus. Functionally, transcription factor. Interacts specifically with the W box (5'-(T)TGAC[CT]-3'), a frequently occurring elicitor-responsive cis-acting element. This Arabidopsis thaliana (Mouse-ear cress) protein is Probable WRKY transcription factor 39 (WRKY39).